We begin with the raw amino-acid sequence, 287 residues long: 3-methyl-2-oxobutanoate hydroxymethyltransferase (287 aa).

The span at 1–19 shows a compositional bias: polar residues; it reads MSTLPKTLTLDTSTSRANP. Residues 1-24 are disordered; it reads MSTLPKTLTLDTSTSRANPTPQPM. Residues D66 and D105 each coordinate Mg(2+). 3-methyl-2-oxobutanoate-binding positions include 66–67, D105, and K135; that span reads DS. Residue E137 participates in Mg(2+) binding. E204 serves as the catalytic Proton acceptor.

This sequence belongs to the PanB family. Homodecamer; pentamer of dimers. Mg(2+) serves as cofactor.

It localises to the cytoplasm. The enzyme catalyses 3-methyl-2-oxobutanoate + (6R)-5,10-methylene-5,6,7,8-tetrahydrofolate + H2O = 2-dehydropantoate + (6S)-5,6,7,8-tetrahydrofolate. It participates in cofactor biosynthesis; (R)-pantothenate biosynthesis; (R)-pantoate from 3-methyl-2-oxobutanoate: step 1/2. Its function is as follows. Catalyzes the reversible reaction in which hydroxymethyl group from 5,10-methylenetetrahydrofolate is transferred onto alpha-ketoisovalerate to form ketopantoate. The protein is 3-methyl-2-oxobutanoate hydroxymethyltransferase of Sphingopyxis alaskensis (strain DSM 13593 / LMG 18877 / RB2256) (Sphingomonas alaskensis).